Reading from the N-terminus, the 740-residue chain is ATP-dependent RNA helicase DDX1 (740 aa).

Residues 1-295 (MAAFSEMGVM…APKALIVEPS (295 aa)) form a necessary for interaction with HNRNPK region. The segment at 1–448 (MAAFSEMGVM…DTVHHVVVPV (448 aa)) is interaction with dsRNA. Residues 1–525 (MAAFSEMGVM…KIDCDNLEQY (525 aa)) form a necessary for interaction with RELA region. The Helicase ATP-binding domain occupies 2 to 428 (AAFSEMGVMP…SEKIMHFPTW (427 aa)). 46 to 53 (AETGSGKT) lines the ATP pocket. Residues 70–247 (DQQEGKKGKT…LKFNFGEEEF (178 aa)) form the B30.2/SPRY domain. Lysine 239 and lysine 268 each carry N6-acetyllysine. Lysine 281 is subject to N6-acetyllysine; alternate. Residue lysine 281 forms a Glycyl lysine isopeptide (Lys-Gly) (interchain with G-Cter in SUMO2); alternate linkage. The DEAD box signature appears at 370-373 (DEAD). Phosphoserine is present on serine 481. The Helicase C-terminal domain maps to 493–681 (KGEYAVRAIK…QVEPDIKVPV (189 aa)). Residues 525-740 (YFMQQGGGPD…YLPNQLFRTF (216 aa)) form a necessary for interaction with HNRNPK region.

It belongs to the DEAD box helicase family. DDX1 subfamily. In terms of assembly, found in a multi-helicase-TICAM1 complex at least composed of DHX36, DDX1, DDX21 and TICAM1; this complex exists in resting cells with or without poly(I:C) RNA ligand stimulation. Interacts with DHX36. Interacts (via B30.2/SPRY domain) with DDX21 (via N-terminus); this interaction serves as bridges to TICAM1. Interacts with FAM98A (via N- and C-terminus). Interacts with PHF5A (via C-terminus). Interacts with MBNL1. Interacts with CSTF2. Interacts with HNRNPK. Interacts with ATM. Interacts with RELA (via C-terminus). Component of the tRNA-splicing ligase complex. Interacts with PQBP1. Interacts with ERCC6. Phosphorylated by ATM kinase; phosphorylation is increased in response to ionizing radiation (IR).

The protein resides in the nucleus. It is found in the cytoplasm. Its subcellular location is the cytoplasmic granule. The protein localises to the cytosol. It localises to the mitochondrion. The catalysed reaction is ATP + H2O = ADP + phosphate + H(+). In terms of biological role, acts as an ATP-dependent RNA helicase, able to unwind both RNA-RNA and RNA-DNA duplexes. Possesses 5' single-stranded RNA overhang nuclease activity. Possesses ATPase activity on various RNA, but not DNA polynucleotides. May play a role in RNA clearance at DNA double-strand breaks (DSBs), thereby facilitating the template-guided repair of transcriptionally active regions of the genome. Together with RELA, acts as a coactivator to enhance NF-kappa-B-mediated transcriptional activation. Acts as a positive transcriptional regulator of cyclin CCND2 expression. Binds to the cyclin CCND2 promoter region. Associates with chromatin at the NF-kappa-B promoter region via association with RELA. Binds to poly(A) RNA. May be involved in 3'-end cleavage and polyadenylation of pre-mRNAs. Component of the tRNA-splicing ligase complex required to facilitate the enzymatic turnover of catalytic subunit RTCB: together with archease (ZBTB8OS), acts by facilitating the guanylylation of RTCB, a key intermediate step in tRNA ligation. Component of a multi-helicase-TICAM1 complex that acts as a cytoplasmic sensor of viral double-stranded RNA (dsRNA) and plays a role in the activation of a cascade of antiviral responses including the induction of pro-inflammatory cytokines via the adapter molecule TICAM1. Specifically binds (via helicase ATP-binding domain) on both short and long poly(I:C) dsRNA. This Macaca fascicularis (Crab-eating macaque) protein is ATP-dependent RNA helicase DDX1 (DDX1).